An 86-amino-acid chain; its full sequence is Protein YwqI (86 aa).

Residues 57–83 (DYKKAVQKNIEDTKDNVDSLKEQDEAI) adopt a coiled-coil conformation.

The protein is Protein YwqI (ywqI) of Bacillus subtilis (strain 168).